Consider the following 372-residue polypeptide: C-X-C chemokine receptor type 5 (372 aa).

The Extracellular portion of the chain corresponds to 1–55 (MNYPLTLEMDLENLEDLFWELDRLDNYNDTSLVENHLCPATEGPLMASFKAVFVP). Asparagine 28 carries N-linked (GlcNAc...) asparagine glycosylation. The helical transmembrane segment at 56–76 (VAYSLIFLLGVIGNVLVLVIL) threads the bilayer. At 77–88 (ERHRQTRSSTET) the chain is on the cytoplasmic side. A helical membrane pass occupies residues 89–109 (FLFHLAVADLLLVFILPFAVA). Over 110 to 124 (EGSVGWVLGTFLCKT) the chain is Extracellular. Cysteine 122 and cysteine 202 are oxidised to a cystine. The chain crosses the membrane as a helical span at residues 125 to 145 (VIALHKVNFYCSSLLLACIAV). Residues 146 to 167 (DRYLAIVHAVHAYRHRRLLSIH) lie on the Cytoplasmic side of the membrane. The helical transmembrane segment at 168–188 (ITCGTIWLVGFLLALPEILFA) threads the bilayer. Residues 189–219 (KVSQGHHNNSLPRCTFSQENQAETHAWFTSR) lie on the Extracellular side of the membrane. An N-linked (GlcNAc...) asparagine glycan is attached at asparagine 196. Residues 220–240 (FLYHVAGFLLPMLVMGWCYVG) traverse the membrane as a helical segment. Residues 241-259 (VVHRLRQAQRRPQRQKAVR) are Cytoplasmic-facing. Residues 260-280 (VAILVTSIFFLCWSPYHIVIF) traverse the membrane as a helical segment. Over 281–304 (LDTLARLKAVDNTCKLNGSLPVAI) the chain is Extracellular. Residues 305 to 325 (TMCEFLGLAHCCLNPMLYTFA) form a helical membrane-spanning segment. Over 326–372 (GVKFRSDLSRLLTKLGCTGPASLCQLFPSWRRSSLSESENATSLTTF) the chain is Cytoplasmic.

The protein belongs to the G-protein coupled receptor 1 family. As to expression, expression in mature B-cells and Burkitt lymphoma cells.

It localises to the cell membrane. Its function is as follows. Cytokine receptor that binds to B-lymphocyte chemoattractant (BLC). Involved in B-cell migration into B-cell follicles of spleen and Peyer patches but not into those of mesenteric or peripheral lymph nodes. May have a regulatory function in Burkitt lymphoma (BL) lymphomagenesis and/or B-cell differentiation. In Homo sapiens (Human), this protein is C-X-C chemokine receptor type 5 (CXCR5).